Reading from the N-terminus, the 401-residue chain is Argininosuccinate synthase (401 aa).

ATP is bound at residue 8-16 (AYSGGLDTS). Residue Tyr86 participates in L-citrulline binding. An ATP-binding site is contributed by Gly116. Residues Thr118, Asn122, and Asp123 each coordinate L-aspartate. Position 122 (Asn122) interacts with L-citrulline. L-citrulline contacts are provided by Arg126, Ser174, Glu258, and Tyr270.

This sequence belongs to the argininosuccinate synthase family. Type 1 subfamily. As to quaternary structure, homotetramer.

The protein localises to the cytoplasm. The enzyme catalyses L-citrulline + L-aspartate + ATP = 2-(N(omega)-L-arginino)succinate + AMP + diphosphate + H(+). The protein operates within amino-acid biosynthesis; L-arginine biosynthesis; L-arginine from L-ornithine and carbamoyl phosphate: step 2/3. In Acidothermus cellulolyticus (strain ATCC 43068 / DSM 8971 / 11B), this protein is Argininosuccinate synthase.